Reading from the N-terminus, the 49-residue chain is Glycolactin (49 aa).

This sequence belongs to the pancreatic ribonuclease family. Post-translationally, glycosylated. In terms of tissue distribution, milk.

It is found in the secreted. Functionally, manifests poly C-specific RNase activity toward yeast tRNA, elicits a dose-dependent inhibition of cell-free translation, inhibits formation of superoxide ions in vitro and inhibits the hemagglutinating activities of soybean lectin and Ricinus communis agglutinin 120. Inhibits HIV-1 reverse transcriptase. This chain is Glycolactin, found in Bos taurus (Bovine).